We begin with the raw amino-acid sequence, 536 residues long: Phosphoenolpyruvate carboxykinase (ATP) (536 aa).

Substrate-binding residues include Arg-61, Tyr-195, and Lys-201. ATP is bound by residues Lys-201, His-220, and 236–244 (GLSGTGKTT). Residues Lys-201 and His-220 each coordinate Mn(2+). Asp-257 serves as a coordination point for Mn(2+). Residues Glu-285, Arg-323, and Thr-448 each contribute to the ATP site. Arg-323 serves as a coordination point for substrate.

The protein belongs to the phosphoenolpyruvate carboxykinase (ATP) family. It depends on Mn(2+) as a cofactor.

It localises to the cytoplasm. The enzyme catalyses oxaloacetate + ATP = phosphoenolpyruvate + ADP + CO2. It participates in carbohydrate biosynthesis; gluconeogenesis. Its function is as follows. Involved in the gluconeogenesis. Catalyzes the conversion of oxaloacetate (OAA) to phosphoenolpyruvate (PEP) through direct phosphoryl transfer between the nucleoside triphosphate and OAA. This chain is Phosphoenolpyruvate carboxykinase (ATP), found in Methylobacterium sp. (strain 4-46).